The chain runs to 432 residues: 23S rRNA (uracil(1939)-C(5))-methyltransferase RlmD (432 aa).

A TRAM domain is found at 1–53; the sequence is MPIGKIESLDHEARGITRQEGKAIFVDGALPGETVEYASFRRKSKFELAHLVH. [4Fe-4S] cluster is bound by residues Cys66, Cys72, Cys75, and Cys154. S-adenosyl-L-methionine is bound by residues Gln263, Phe292, Asn297, Glu313, Asn341, and Asp362. Cys388 (nucleophile) is an active-site residue.

The protein belongs to the class I-like SAM-binding methyltransferase superfamily. RNA M5U methyltransferase family. RlmD subfamily.

It catalyses the reaction uridine(1939) in 23S rRNA + S-adenosyl-L-methionine = 5-methyluridine(1939) in 23S rRNA + S-adenosyl-L-homocysteine + H(+). Its function is as follows. Catalyzes the formation of 5-methyl-uridine at position 1939 (m5U1939) in 23S rRNA. The chain is 23S rRNA (uracil(1939)-C(5))-methyltransferase RlmD from Dechloromonas aromatica (strain RCB).